Consider the following 327-residue polypeptide: Undecaprenyl-phosphate 4-deoxy-4-formamido-L-arabinose transferase (327 aa).

At 1-235 (MFDAAPIKKV…TCLTTTPLRL (235 aa)) the chain is on the cytoplasmic side. Residues 236–256 (LSLLGSVIAIGGFSLSVLLIV) traverse the membrane as a helical segment. Topologically, residues 257 to 269 (LRLALGPQWAAEG) are periplasmic. A helical membrane pass occupies residues 270 to 290 (VFMLFAVLFTFIGAQFIGMGL). Residues 291-327 (LGEYIGRIYNDVRARPRYFVQQVIYPESTPFTEESHQ) are Cytoplasmic-facing.

It belongs to the glycosyltransferase 2 family.

The protein resides in the cell inner membrane. It catalyses the reaction UDP-4-deoxy-4-formamido-beta-L-arabinose + di-trans,octa-cis-undecaprenyl phosphate = 4-deoxy-4-formamido-alpha-L-arabinopyranosyl di-trans,octa-cis-undecaprenyl phosphate + UDP. The protein operates within glycolipid biosynthesis; 4-amino-4-deoxy-alpha-L-arabinose undecaprenyl phosphate biosynthesis; 4-amino-4-deoxy-alpha-L-arabinose undecaprenyl phosphate from UDP-4-deoxy-4-formamido-beta-L-arabinose and undecaprenyl phosphate: step 1/2. It functions in the pathway bacterial outer membrane biogenesis; lipopolysaccharide biosynthesis. Its function is as follows. Catalyzes the transfer of 4-deoxy-4-formamido-L-arabinose from UDP to undecaprenyl phosphate. The modified arabinose is attached to lipid A and is required for resistance to polymyxin and cationic antimicrobial peptides. This is Undecaprenyl-phosphate 4-deoxy-4-formamido-L-arabinose transferase from Salmonella agona (strain SL483).